We begin with the raw amino-acid sequence, 395 residues long: L-rhamnonate dehydratase (395 aa).

H23 and R49 together coordinate substrate. Positions 215, 241, and 269 each coordinate Mg(2+). The active-site Proton acceptor is the H319. E339 contacts substrate.

It belongs to the mandelate racemase/muconate lactonizing enzyme family. RhamD subfamily. Homooctamer; tetramer of dimers. The cofactor is Mg(2+).

The enzyme catalyses L-rhamnonate = 2-dehydro-3-deoxy-L-rhamnonate + H2O. Its function is as follows. Catalyzes the dehydration of L-rhamnonate to 2-keto-3-deoxy-L-rhamnonate (KDR). This is L-rhamnonate dehydratase (rhmD) from Polaromonas sp. (strain JS666 / ATCC BAA-500).